The chain runs to 464 residues: Glycine--tRNA ligase (464 aa).

Substrate contacts are provided by arginine 104 and glutamate 175. Residues 207-209 (RNE), 217-222 (FRTREF), 292-293 (EL), and 336-339 (GVNR) each bind ATP. 222 to 226 (FEQME) contributes to the substrate binding site. Residue 332–336 (EPALG) participates in substrate binding.

It belongs to the class-II aminoacyl-tRNA synthetase family. As to quaternary structure, homodimer.

Its subcellular location is the cytoplasm. The enzyme catalyses tRNA(Gly) + glycine + ATP = glycyl-tRNA(Gly) + AMP + diphosphate. Functionally, catalyzes the attachment of glycine to tRNA(Gly). This is Glycine--tRNA ligase from Leptospira interrogans serogroup Icterohaemorrhagiae serovar copenhageni (strain Fiocruz L1-130).